The chain runs to 480 residues: CASP8 and FADD-like apoptosis regulator (480 aa).

DED domains follow at residues 1–73 and 92–170; these read MSAE…RILK and DYRV…KIQK. Residues 1–195 are interaction with CASP8; the sequence is MSAEVIHQVE…LQAAIQKSLK (195 aa). Positions 1-227 are interaction with FADD; that stretch reads MSAEVIHQVE…GAQQEPVKKS (227 aa). The interaction with CASP8 propeptide stretch occupies residues 1 to 305; the sequence is MSAEVIHQVE…FACMPEHRDY (305 aa). A not proteolytically processed and involved in apoptosis inhibition region spans residues 1–435; sequence MSAEVIHQVE…CLSQKLRQER (435 aa). The segment at 192–435 is interaction with CASP3; it reads KSLKDPSNNF…CLSQKLRQER (244 aa). The interval 192–480 is interaction with TRAF1 and TRAF2; the sequence is KSLKDPSNNF…LRKKLILSYT (289 aa). The interaction with CASP8 subunits p18 and p10 stretch occupies residues 217 to 480; that stretch reads LGAQQEPVKK…LRKKLILSYT (264 aa). The segment at 263 to 358 is caspase; it reads ETELLRDTFT…AGKPKMFFIQ (96 aa). The segment at 370-480 is interaction with CASP8; sequence SSLLEVDGPA…LRKKLILSYT (111 aa).

The protein belongs to the peptidase C14A family. As to quaternary structure, TNFRSF6 stimulation triggers recruitment to the death-inducing signaling complex (DISC) formed by TNFRSF6, FADD and CASP8. A proteolytic fragment (p43) stays associated with the DISC. Also interacts with FADD, CASP8, CASP3, TRAF1, TRAF2 and Bcl-X(L) (in vitro). Interacts with RIPK1. In terms of assembly, (Microbial infection) Interacts with HBV protein X. Post-translationally, proteolytically processed by CASP8 generating subunit p43 and p12. Widely expressed. Higher expression in skeletal muscle, pancreas, heart, kidney, placenta, and peripheral blood leukocytes. Also detected in diverse cell lines. Isoform 8 is predominantly expressed in testis and skeletal muscle.

Apoptosis regulator protein which may function as a crucial link between cell survival and cell death pathways in mammalian cells. Acts as an inhibitor of TNFRSF6 mediated apoptosis. A proteolytic fragment (p43) is likely retained in the death-inducing signaling complex (DISC) thereby blocking further recruitment and processing of caspase-8 at the complex. Full length and shorter isoforms have been shown either to induce apoptosis or to reduce TNFRSF-triggered apoptosis. Lacks enzymatic (caspase) activity. In Homo sapiens (Human), this protein is CASP8 and FADD-like apoptosis regulator (CFLAR).